Reading from the N-terminus, the 397-residue chain is Elongation factor Tu (397 aa).

A tr-type G domain is found at 10 to 207 (KPHVNIGTIG…VLDEYVKEPV (198 aa)). The segment at 19–26 (GHIDHGKT) is G1. 19 to 26 (GHIDHGKT) contributes to the GTP binding site. T26 serves as a coordination point for Mg(2+). A G2 region spans residues 60-64 (GITIS). A G3 region spans residues 81 to 84 (DCPG). GTP-binding positions include 81 to 85 (DCPGH) and 136 to 139 (NKCD). The interval 136-139 (NKCD) is G4. A G5 region spans residues 174–176 (SAL).

The protein belongs to the TRAFAC class translation factor GTPase superfamily. Classic translation factor GTPase family. EF-Tu/EF-1A subfamily. Monomer.

The protein localises to the cytoplasm. The enzyme catalyses GTP + H2O = GDP + phosphate + H(+). In terms of biological role, GTP hydrolase that promotes the GTP-dependent binding of aminoacyl-tRNA to the A-site of ribosomes during protein biosynthesis. This Desulforapulum autotrophicum (strain ATCC 43914 / DSM 3382 / VKM B-1955 / HRM2) (Desulfobacterium autotrophicum) protein is Elongation factor Tu.